Here is a 213-residue protein sequence, read N- to C-terminus: 3-demethoxyubiquinol 3-hydroxylase (213 aa).

Fe cation-binding residues include glutamate 62, glutamate 92, histidine 95, glutamate 144, glutamate 176, and histidine 179.

The protein belongs to the COQ7 family. Fe cation is required as a cofactor.

The protein resides in the cell membrane. The enzyme catalyses a 5-methoxy-2-methyl-3-(all-trans-polyprenyl)benzene-1,4-diol + AH2 + O2 = a 3-demethylubiquinol + A + H2O. Its pathway is cofactor biosynthesis; ubiquinone biosynthesis. Its function is as follows. Catalyzes the hydroxylation of 2-nonaprenyl-3-methyl-6-methoxy-1,4-benzoquinol during ubiquinone biosynthesis. This Psychrobacter sp. (strain PRwf-1) protein is 3-demethoxyubiquinol 3-hydroxylase.